The following is a 519-amino-acid chain: Probable cytochrome P450 513D1 (519 aa).

A helical membrane pass occupies residues 1–21 (MGISSIIIILFIIVLLKKLIK). Cys-464 lines the heme pocket.

This sequence belongs to the cytochrome P450 family. Requires heme as cofactor.

Its subcellular location is the membrane. The polypeptide is Probable cytochrome P450 513D1 (cyp513D1) (Dictyostelium discoideum (Social amoeba)).